The primary structure comprises 392 residues: 8-amino-7-oxononanoate synthase (392 aa).

Arginine 26 is a substrate binding site. A pyridoxal 5'-phosphate-binding site is contributed by 113 to 114 (GY). Histidine 138 contributes to the substrate binding site. Residues serine 186, histidine 214, and threonine 241 each contribute to the pyridoxal 5'-phosphate site. Lysine 244 carries the N6-(pyridoxal phosphate)lysine modification. A substrate-binding site is contributed by threonine 353.

Belongs to the class-II pyridoxal-phosphate-dependent aminotransferase family. BioF subfamily. In terms of assembly, homodimer. Pyridoxal 5'-phosphate serves as cofactor.

It carries out the reaction 6-carboxyhexanoyl-[ACP] + L-alanine + H(+) = (8S)-8-amino-7-oxononanoate + holo-[ACP] + CO2. The protein operates within cofactor biosynthesis; biotin biosynthesis. Its function is as follows. Catalyzes the decarboxylative condensation of pimeloyl-[acyl-carrier protein] and L-alanine to produce 8-amino-7-oxononanoate (AON), [acyl-carrier protein], and carbon dioxide. The protein is 8-amino-7-oxononanoate synthase of Maricaulis maris (strain MCS10) (Caulobacter maris).